The sequence spans 201 residues: Recombination protein RecR (201 aa).

The segment at 57–72 (CQVCYSLSDNDICDIC) adopts a C4-type zinc-finger fold. One can recognise a Toprim domain in the interval 80–177 (NKICIVESYP…RITRITYGIS (98 aa)).

The protein belongs to the RecR family.

Functionally, may play a role in DNA repair. It seems to be involved in an RecBC-independent recombinational process of DNA repair. It may act with RecF and RecO. This Brachyspira hyodysenteriae (strain ATCC 49526 / WA1) protein is Recombination protein RecR.